We begin with the raw amino-acid sequence, 456 residues long: IQ domain-containing protein IQM3 (456 aa).

The IQ domain maps to 46 to 75 (TRLAAVKVQKVYRSYRTRRRLADSVVVAEE). A disordered region spans residues 315–358 (SEDSDSYDDYVKSNGGSEPEPLKKEDTTFQAETETDENGNGTVG).

In terms of tissue distribution, expressed in roots, rosette and cauline leaves, flowers and siliques, and at lower levels in stems.

The protein resides in the cytoplasm. The protein localises to the nucleus. Functionally, may be involved in biotic and abiotic stress responses. The polypeptide is IQ domain-containing protein IQM3 (Arabidopsis thaliana (Mouse-ear cress)).